Consider the following 204-residue polypeptide: Phosphopantothenoylcysteine decarboxylase (204 aa).

FMN contacts are provided by residues Phe59 and 104–107; that span reads DANT. Asn140 lines the substrate pocket. Cys173 (proton donor) is an active-site residue.

It belongs to the HFCD (homooligomeric flavin containing Cys decarboxylase) superfamily. Homotrimer. FMN is required as a cofactor.

The enzyme catalyses N-[(R)-4-phosphopantothenoyl]-L-cysteine + H(+) = (R)-4'-phosphopantetheine + CO2. Its pathway is cofactor biosynthesis; coenzyme A biosynthesis; CoA from (R)-pantothenate: step 3/5. Catalyzes the decarboxylation of the cysteine moiety of 4-phosphopantothenoylcysteine to form 4'-phosphopantotheine and this reaction forms part of the biosynthesis of coenzyme A. The polypeptide is Phosphopantothenoylcysteine decarboxylase (PPCDC) (Homo sapiens (Human)).